The sequence spans 336 residues: Ethanol acetyltransferase 1 (336 aa).

The transit peptide at 1–14 (MFPTRVLRSTLQKL) directs the protein to the mitochondrion. An AB hydrolase-1 domain is found at 44-296 (PIVFLHGIFG…VNSSHDILDQ (253 aa)). Active-site charge relay system residues include serine 117, aspartate 141, and histidine 291.

Belongs to the AB hydrolase superfamily.

The protein resides in the mitochondrion. It carries out the reaction ethanol + acetyl-CoA = ethyl acetate + CoA. The enzyme catalyses acetyl-CoA + H2O = acetate + CoA + H(+). The catalysed reaction is ethyl acetate + H2O = ethanol + acetate + H(+). Its function is as follows. Alcohol acetyltransferase that catalyzes the synthesis of ethyl acetate from ethanol and acetyl-CoA. Can also function as a thioesterase by hydrolyzing acetyl-CoA in the absence of ethanol, as well as esterase hydrolyzing ethyl acetate. The chain is Ethanol acetyltransferase 1 (EAT1) from Cyberlindnera jadinii (strain ATCC 18201 / CBS 1600 / BCRC 20928 / JCM 3617 / NBRC 0987 / NRRL Y-1542) (Torula yeast).